Consider the following 305-residue polypeptide: Target of rapamycin complex subunit LST8-1 (305 aa).

7 WD repeats span residues 1-30 (MSQP…CYRT), 33-71 (YPDS…PQPV), 76-115 (SHTN…CQKE), 117-156 (ESVA…CSCE), 160-199 (EVDT…QTMT), 209-248 (AHNG…LEKV), and 251-292 (GHQR…KVYQ).

This sequence belongs to the WD repeat LST8 family. The target of rapamycin complex 1 (TORC1) is composed of at least RAPTOR, LST8 and TOR. Interacts with TOR. Expressed in the root central cylinder, root tips, emerging lateral roots, vasculature of cotyledons, leaf stomata, leaf stipules, anthers, pollen, filaments, and vasculature of petals and sepals.

It localises to the endosome. Component of TORC1 complex, which is an essential cell growth regulator that controls plant development. Acts by activating transcription, protein synthesis and ribosome biogenesis, and inhibiting mRNA degradation and autophagy. Involved in regulating amino acid accumulation and the synthesis of myo-inositol and raffinose during plant adaptation to long days. Involved in the regulation of plant growth and abscisic acid (ABA) accumulation. Acts as a positive regulation of the ABA biosynthetic genes ZEP, NCED3 and AAO3, and negative regulator of the ABA catabolic genes CYP707A2 and CYP707A3. The polypeptide is Target of rapamycin complex subunit LST8-1 (Arabidopsis thaliana (Mouse-ear cress)).